The primary structure comprises 2458 residues: Acetyl-CoA carboxylase 2 (2458 aa).

At serine 35 the chain carries Phosphoserine. The segment at 35 to 155 is disordered; that stretch reads SKSEANLIPS…SPSKEDKKQA (121 aa). The segment covering 51 to 60 has biased composition (polar residues); that stretch reads SDNSGETPQR. Phosphothreonine is present on threonine 70. Positions 77-87 are enriched in basic and acidic residues; sequence ASHKGPKDAGR. Serine 91 and serine 95 each carry phosphoserine. Residues 103-146 show a composition bias toward polar residues; sequence PLSSSDAAPSPELQANGTGTQGLEATDTNGLSSSARPQGQQAGS. Serine 169, serine 175, serine 192, serine 195, and serine 200 each carry phosphoserine. The segment at 174-193 is disordered; that stretch reads SSDEDSVAGSSRESTRKGSR. A Phosphothreonine modification is found at threonine 207. Serine 220 is modified (phosphoserine). At serine 222 the chain carries Phosphoserine; by AMPK. A Biotin carboxylation domain is found at 259–761; sequence VIEKVLIANN…DTGWLDYLIA (503 aa). In terms of domain architecture, ATP-grasp spans 414 to 609; that stretch reads DDLQQGKRIS…LPAAQLQIAM (196 aa). Position 458–463 (458–463) interacts with ATP; that stretch reads GGGGKG. At serine 469 the chain carries Phosphoserine. Glutamate 567, glutamate 580, and asparagine 582 together coordinate Mg(2+). 3 residues coordinate Mn(2+): glutamate 567, glutamate 580, and asparagine 582. Arginine 584 is a catalytic residue. Threonine 753 carries the post-translational modification Phosphothreonine. The Biotinyl-binding domain maps to 888-962; sequence FEKENDPTVL…EAGCVVARLE (75 aa). Lysine 929 bears the N6-biotinyllysine mark. Position 1340 is a phosphoserine (serine 1340). A Phosphothreonine modification is found at threonine 1342. Residues serine 1360 and serine 1405 each carry the phosphoserine modification. Residues 1695-2025 form the CoA carboxyltransferase N-terminal domain; that stretch reads PYVTKDLLQA…DNHSPVPIIT (331 aa). The segment at 1695–2345 is carboxyltransferase; sequence PYVTKDLLQA…EDQVKQEILQ (651 aa). Arginine 1934, lysine 2238, and arginine 2240 together coordinate CoA. The 317-residue stretch at 2029 to 2345 folds into the CoA carboxyltransferase C-terminal domain; the sequence is PIDREIEFLP…EDQVKQEILQ (317 aa).

Monomer, homodimer, and homotetramer. Forms filamentous polymers. Interacts with MID1IP1; interaction with MID1IP1 promotes oligomerization and increases its activity in a citrate-dependent manner. The cofactor is biotin. Mg(2+) serves as cofactor. Requires Mn(2+) as cofactor. In terms of processing, the biotin cofactor is covalently attached to the central biotinyl-binding domain and is required for the catalytic activity. Phosphorylation at Ser-222 by AMPK inactivates the enzyme. Required for the maintenance of skeletal muscle lipid and glucose homeostasis. In terms of tissue distribution, widely expressed with highest levels in heart, skeletal muscle, liver, adipose tissue, mammary gland, adrenal gland and colon. Isoform 3 is expressed in skeletal muscle, adipose tissue and liver (at protein level). Isoform 3 is detected at high levels in adipose tissue with lower levels in heart, liver, skeletal muscle and testis.

The protein localises to the mitochondrion. The enzyme catalyses hydrogencarbonate + acetyl-CoA + ATP = malonyl-CoA + ADP + phosphate + H(+). It functions in the pathway lipid metabolism; malonyl-CoA biosynthesis; malonyl-CoA from acetyl-CoA: step 1/1. Activity is increased by oligomerization of the protein into filaments. The oligomerization and the activity of the enzyme are inhibited by phosphorylation at Ser-222. Inhibited by its product, malonyl-CoA. Activated by citrate. Activation by MID1IP1 is citrate-dependent. Soraphen A, inhibits the enzyme by preventing the formation of active filamentous oligomers. Its function is as follows. Mitochondrial enzyme that catalyzes the carboxylation of acetyl-CoA to malonyl-CoA and plays a central role in fatty acid metabolism. Catalyzes a 2 steps reaction starting with the ATP-dependent carboxylation of the biotin carried by the biotin carboxyl carrier (BCC) domain followed by the transfer of the carboxyl group from carboxylated biotin to acetyl-CoA. Through the production of malonyl-CoA that allosterically inhibits carnitine palmitoyltransferase 1 at the mitochondria, negatively regulates fatty acid oxidation. Together with its cytosolic isozyme ACACA, which is involved in de novo fatty acid biosynthesis, promotes lipid storage. In Homo sapiens (Human), this protein is Acetyl-CoA carboxylase 2.